Reading from the N-terminus, the 244-residue chain is MSQLDLNALNELPKVDRVMALAETNAQLEKLSAEERVAWALENLPGEYVLSSSFGIQAAVSLHLVNQIRPDIPVILTDTGYLFPETYQFIDELTDKLKLNLKVYRAGESPAWQEARYGKLWEQGVEGIEKYNDINKVEPMNRALKELKAQTWFAGLRREQSGSRAHLPVLAIQRGVFKVLPIIDWDNRTVYQYLQKHGLKYHPLWDQGYLSVGDIHTTRKWEPGMAEEETRFFGLKRECGLHEG.

Residue Cys239 is the Nucleophile; cysteine thiosulfonate intermediate of the active site.

The protein belongs to the PAPS reductase family. CysH subfamily.

The protein resides in the cytoplasm. The catalysed reaction is [thioredoxin]-disulfide + sulfite + adenosine 3',5'-bisphosphate + 2 H(+) = [thioredoxin]-dithiol + 3'-phosphoadenylyl sulfate. It participates in sulfur metabolism; hydrogen sulfide biosynthesis; sulfite from sulfate: step 3/3. Its function is as follows. Catalyzes the formation of sulfite from phosphoadenosine 5'-phosphosulfate (PAPS) using thioredoxin as an electron donor. In Salmonella newport (strain SL254), this protein is Phosphoadenosine 5'-phosphosulfate reductase.